The primary structure comprises 296 residues: Putative gluconeogenesis factor (296 aa).

Belongs to the gluconeogenesis factor family.

Its subcellular location is the cytoplasm. Its function is as follows. Required for morphogenesis under gluconeogenic growth conditions. The chain is Putative gluconeogenesis factor from Vibrio cholerae serotype O1 (strain ATCC 39315 / El Tor Inaba N16961).